The following is a 311-amino-acid chain: Probable manganese-dependent inorganic pyrophosphatase (311 aa).

Residues His-9, Asp-13, Asp-15, Asp-75, His-97, and Asp-149 each coordinate Mn(2+).

It belongs to the PPase class C family. Mn(2+) is required as a cofactor.

Its subcellular location is the cytoplasm. It carries out the reaction diphosphate + H2O = 2 phosphate + H(+). This chain is Probable manganese-dependent inorganic pyrophosphatase, found in Lactobacillus acidophilus (strain ATCC 700396 / NCK56 / N2 / NCFM).